We begin with the raw amino-acid sequence, 128 residues long: uncharacterized protein (128 aa).

The next 3 membrane-spanning stretches (helical) occupy residues 13-35, 42-64, and 90-112; these read FQMA…VFFV, IIAL…YNGG, and LVLT…SIIL.

The protein localises to the cell membrane. This is an uncharacterized protein from Methanocaldococcus jannaschii (strain ATCC 43067 / DSM 2661 / JAL-1 / JCM 10045 / NBRC 100440) (Methanococcus jannaschii).